The primary structure comprises 607 residues: Dolichyl-diphosphooligosaccharide--protein glycosyltransferase subunit 1 (607 aa).

Residues 1–23 (MEAPAAGLFLLLLLGTWAPAPGS) form the signal peptide. The Lumenal segment spans residues 24-438 (ASSEAPPLIN…TFNKVLMLQE (415 aa)). The residue at position 187 (K187) is an N6-acetyllysine. The N-linked (GlcNAc...) asparagine glycan is linked to N299. Residues 439–457 (PLLVVAAFYILFFTVIIYV) form a helical membrane-spanning segment. Over 458–607 (RLDFSITKDP…TKIDHILDAL (150 aa)) the chain is Cytoplasmic. N6-acetyllysine; alternate is present on K538. Residue K538 forms a Glycyl lysine isopeptide (Lys-Gly) (interchain with G-Cter in SUMO2); alternate linkage.

The protein belongs to the OST1 family. As to quaternary structure, component of the oligosaccharyltransferase (OST) complex. OST exists in two different complex forms which contain common core subunits RPN1, RPN2, OST48, OST4, DAD1 and TMEM258, either STT3A or STT3B as catalytic subunits, and form-specific accessory subunits. STT3A complex assembly occurs through the formation of 3 subcomplexes. Subcomplex 1 contains RPN1 and TMEM258, subcomplex 2 contains the STT3A-specific subunits STT3A, DC2/OSTC, and KCP2 as well as the core subunit OST4, and subcomplex 3 contains RPN2, DAD1, and OST48. The STT3A complex can form stable complexes with the Sec61 complex or with both the Sec61 and TRAP complexes. Interacts with TMEM35A/NACHO. Post-translationally, ubiquitinated by the ECS(ASB11) complex. Ubiquitinated by RNF128, leading to degradation in a proteasome/lysosome-dependent manner. Ufmylated by UFL1 in response to endoplasmic reticulum stress, promoting reticulophagy of endoplasmic reticulum sheets. As to expression, expressed in all tissues tested.

It localises to the endoplasmic reticulum membrane. The protein localises to the melanosome. It participates in protein modification; protein glycosylation. Subunit of the oligosaccharyl transferase (OST) complex that catalyzes the initial transfer of a defined glycan (Glc(3)Man(9)GlcNAc(2) in eukaryotes) from the lipid carrier dolichol-pyrophosphate to an asparagine residue within an Asn-X-Ser/Thr consensus motif in nascent polypeptide chains, the first step in protein N-glycosylation. N-glycosylation occurs cotranslationally and the complex associates with the Sec61 complex at the channel-forming translocon complex that mediates protein translocation across the endoplasmic reticulum (ER). All subunits are required for a maximal enzyme activity. This chain is Dolichyl-diphosphooligosaccharide--protein glycosyltransferase subunit 1, found in Homo sapiens (Human).